We begin with the raw amino-acid sequence, 315 residues long: Acetyl-coenzyme A carboxylase carboxyl transferase subunit alpha (315 aa).

A CoA carboxyltransferase C-terminal domain is found at 39-292 (LEDKSAKLLR…GDALEQELNG (254 aa)).

Belongs to the AccA family. In terms of assembly, acetyl-CoA carboxylase is a heterohexamer composed of biotin carboxyl carrier protein (AccB), biotin carboxylase (AccC) and two subunits each of ACCase subunit alpha (AccA) and ACCase subunit beta (AccD).

It is found in the cytoplasm. The enzyme catalyses N(6)-carboxybiotinyl-L-lysyl-[protein] + acetyl-CoA = N(6)-biotinyl-L-lysyl-[protein] + malonyl-CoA. It participates in lipid metabolism; malonyl-CoA biosynthesis; malonyl-CoA from acetyl-CoA: step 1/1. Functionally, component of the acetyl coenzyme A carboxylase (ACC) complex. First, biotin carboxylase catalyzes the carboxylation of biotin on its carrier protein (BCCP) and then the CO(2) group is transferred by the carboxyltransferase to acetyl-CoA to form malonyl-CoA. This Sphingopyxis alaskensis (strain DSM 13593 / LMG 18877 / RB2256) (Sphingomonas alaskensis) protein is Acetyl-coenzyme A carboxylase carboxyl transferase subunit alpha.